We begin with the raw amino-acid sequence, 540 residues long: Threonine--tRNA ligase catalytic subunit (540 aa).

Residues 134–428 (DHRIIGERLD…LLEHFRGKLP (295 aa)) form a catalytic region. Zn(2+) contacts are provided by cysteine 226, histidine 277, and histidine 405.

It belongs to the class-II aminoacyl-tRNA synthetase family. As to quaternary structure, homodimer. Probably interacts with its editing subunit. Zn(2+) serves as cofactor.

It is found in the cytoplasm. It catalyses the reaction tRNA(Thr) + L-threonine + ATP = L-threonyl-tRNA(Thr) + AMP + diphosphate + H(+). Its function is as follows. Catalyzes the attachment of threonine to tRNA(Thr) in a two-step reaction: L-threonine is first activated by ATP to form Thr-AMP and then transferred to the acceptor end of tRNA(Thr). Also activates L-serine and transfers it to tRNA(Thr) but cannot deacylate incorrectly charged amino acid; unlike most archaea the editing function is found in a freestanding protein. The protein is Threonine--tRNA ligase catalytic subunit of Sulfurisphaera tokodaii (strain DSM 16993 / JCM 10545 / NBRC 100140 / 7) (Sulfolobus tokodaii).